An 87-amino-acid polypeptide reads, in one-letter code: Phospholemman (87 aa).

Residues 1–20 form the signal peptide; it reads MASLSHILVLWVGILTVVNA. Topologically, residues 21–35 are extracellular; sequence EAPQEHDPFTYDYQS. Residues 36–56 form a helical membrane-spanning segment; that stretch reads LRIGGLIIAGILFILGILIVL. Residues 57 to 87 lie on the Cytoplasmic side of the membrane; it reads SRRCRCKFNQQQSLGKMRSPHLAAQFSSESC. Cysteine 60 carries the S-palmitoyl cysteine lipid modification. Cysteine 62 carries the post-translational modification S-glutathionyl cysteine; alternate. Cysteine 62 is lipidated: S-palmitoyl cysteine; alternate. Serine 75 is subject to Phosphoserine; by PKA and PKC. At serine 83 the chain carries Phosphoserine; by PKA.

It belongs to the FXYD family. In terms of assembly, homotetramer. Monomer. Regulatory subunit of the sodium/potassium-transporting ATPase (NKA) which is composed of a catalytic alpha subunit, a non-catalytic beta subunit and an additional regulatory subunit. The monomeric form associates with NKA while the oligomeric form does not. Interacts with the catalytic alpha-1 subunit ATP1A1. Also interacts with the catalytic alpha-2 and alpha-3 subunits ATP1A2 and ATP1A3. Very little interaction with ATP1A1, ATP1A2 or ATP1A3 when phosphorylated at Ser-83. Interacts with the non-catalytic beta-1 subunit ATP1B1. Oxidative stress decreases interaction with ATP1A1 but increases interaction with ATP1B1. Major plasma membrane substrate for cAMP-dependent protein kinase (PKA) and protein kinase C (PKC) in several different tissues. Phosphorylated in response to insulin and adrenergic stimulation. Phosphorylation at Ser-83 stimulates sodium/potassium-transporting ATPase activity while the unphosphorylated form inhibits sodium/potassium-transporting ATPase activity. Phosphorylation increases tetramerization, decreases binding to ATP1A1 and reduces inhibition of ATP1A1 activity. Phosphorylation at Ser-75 leads to greatly reduced interaction with ATP1A1, ATP1A2 and ATP1A3. May be phosphorylated by DMPK. Post-translationally, palmitoylation increases half-life and stability and is enhanced upon phosphorylation at Ser-83 by PKA.

The protein localises to the cell membrane. It localises to the sarcolemma. The protein resides in the apical cell membrane. It is found in the membrane. Its subcellular location is the caveola. The protein localises to the T-tubule. Its function is as follows. Associates with and regulates the activity of the sodium/potassium-transporting ATPase (NKA) which transports Na(+) out of the cell and K(+) into the cell. Inhibits NKA activity in its unphosphorylated state and stimulates activity when phosphorylated. Reduces glutathionylation of the NKA beta-1 subunit ATP1B1, thus reversing glutathionylation-mediated inhibition of ATP1B1. Contributes to female sexual development by maintaining the excitability of neurons which secrete gonadotropin-releasing hormone. The sequence is that of Phospholemman from Sus scrofa (Pig).